The primary structure comprises 1373 residues: DNA-directed RNA polymerase subunit beta (1373 aa).

It belongs to the RNA polymerase beta chain family. As to quaternary structure, the RNAP catalytic core consists of 2 alpha, 1 beta, 1 beta' and 1 omega subunit. When a sigma factor is associated with the core the holoenzyme is formed, which can initiate transcription.

It carries out the reaction RNA(n) + a ribonucleoside 5'-triphosphate = RNA(n+1) + diphosphate. DNA-dependent RNA polymerase catalyzes the transcription of DNA into RNA using the four ribonucleoside triphosphates as substrates. This is DNA-directed RNA polymerase subunit beta from Rickettsia conorii (strain ATCC VR-613 / Malish 7).